We begin with the raw amino-acid sequence, 1432 residues long: MSDIKQLLKEAKQELTNRDYEETIEISEKVLKLDPDNYFAHIFLGKALSSLPASNNVSSNRNLERATNHYVSAAKLVPDNLLAWKGLFLLFRTTEVVPDILSYDEYFDLCGQYADALLKQEQSQVELINDIKLLKKTHPDCQKAFYQHLKPGSLMAETIGRHLSTPQDALLNLIKILSNIETTEIGKTLSQNRLKLKASDPDYQIKLNSFSWEIIKNSEIDQLYNQLVNILADDQKRSEIENQWLEYRIKVLKSMPLDVKKDFFTKVKEMVEDMVLVNHQSLLAWQKYFEWTDYEDLDNMDAPLIIKYFKKFPKDPLAMILYSWLSSKLSKYDIKSLESANKPPEGHKKTEKETDIKDVDETNEDEVKDRVEDEVKDRVEDEVKDQDEEAKEDEEEDLDDIEIGLLEEEVVTVLTENIVKCKNNILAHRILCQYYLLTKEYEAALPYIKNGISLIAYNIKDLGVHLPLTKREFSLDLATVYTYVDAPKDHNAALKLYDNILSGDFSNIQAKMGKGIIFIERKNWKDAMTLLTQVHEQSPNNLEVLSELSWSKAHMGYMDEALAGLDTVIKGIKGMDLRSIDFRALNLWRQAKVYIMKHASINDAKQENVKCAFKLLIQSIKILDTFAPGFSTLGDIYCHYYKDHLRAFKCYFKAFDLDAGDYTAAKYITETYASKPNWQAASSIASRLIKGEKAKAELRSNNWPFRVVGIAHLEKQEESDSIEWFQSALRVDPNDVESWVGLGQAYHACGRIEASIKVFDKAIQLRPSHTFAQYFKAISLCDVGEYLESLDILEKVCQEAATEESFQIGLVEVLMRCSLDLYSQGFLLKSVSIAKDTIERIKIIISELKCENQQVWIYLSQVLRLFIWIESKVDTLPVESLVSIFENSQFSGSEEIDSVDNIKIDTLLDSTTDDNVSIACKFLILASKYSVSDQKFTDIAGTVRASYWYNIGISELTAFITLKEPQYRDAAIFAFKKSIQLQSNTSETWIGLGIATMDINFRVSQHCFIKATALEPKATNTWFNLAMLGLKKKDTEFAQQVLNKLQSLAPQDSSPWLGMALILEEQGDIIGSSKLFAHSFILSNGRSKAAQFMYAKNVLENHINNGDDERDIETVEKLTTASIALEQFFKKSPDSQFALQCALLTLERLHHYENANELANRLIGILEKKFEKTQDERELFNFAIIKGQFARIHLGLGNFELSIENADLSQGIISESSDEKSMKTKISNHICLGLSYFFLNDFDQTLNQFQELLSISKDSKHLVVLIAKVLYDVGESDTKEIALQELTEYIATSGADLLVTLTIAAMSILDDKREDLSIILEELKALPLSKQIIDKHKDAPYLIEEITKRLYRNDTGKQVWQRSAYFFPNNLKVWERLDKNIQRRIASNGQNKVTAEEMSKLYCESKNLRSIQRGMFLCPWNVTAVKALNECF.

2 TPR repeats span residues Ile4–Asn37 and Ala47–Asn80. Residues Ser339–Asp397 are disordered. Basic and acidic residues predominate over residues Pro344 to Asp381. Over residues Glu382–Asp397 the composition is skewed to acidic residues. TPR repeat units follow at residues Ile425–Asn458, Arg471–Asn507, Ile508–Asn541, Ala627–Asp661, Asn702–Asp735, Val736–His769, Ala945–Thr985, Glu987–Ala1018, and Ile1226–Ser1259.

It belongs to the SKI3 family. Component of the SKI complex composed of at least SKI2, SKI3 and SKI8. The SKI complex interacts with SKI7, which makes the link between the SKI complex and the exosome in order to perform mRNA degradation.

The protein resides in the cytoplasm. The protein localises to the nucleus. Component of the SKI complex involved in 3'-mRNA degradation pathway. Represses dsRNA virus propagation by specifically blocking translation of viral mRNAs, perhaps recognizing the absence of CAP or poly(A). Essential for cell growth only in the presence of M1 replicon. The protein is Superkiller protein 3 (SKI3) of Saccharomyces cerevisiae (strain ATCC 204508 / S288c) (Baker's yeast).